The primary structure comprises 118 residues: Myotrophin (118 aa).

The residue at position 2 (Cys2) is an N-acetylcysteine. The ANK 1 repeat unit spans residues 2 to 30 (CDKEFMWALKNGDLDEVKDYVAKGEDVNR). Residues Lys4, Lys11, and Lys24 each carry the N6-acetyllysine modification. Residue Thr31 is modified to Phosphothreonine. ANK repeat units lie at residues 34-66 (GGRK…APDK) and 67-99 (HHIT…VKGP).

The protein belongs to the myotrophin family. As to quaternary structure, interacts with RELA. Interacts with the heterodimer formed by CAPZA1 and CAPZB.

It localises to the cytoplasm. The protein resides in the nucleus. The protein localises to the perinuclear region. Functionally, promotes dimerization of NF-kappa-B subunits and regulates NF-kappa-B transcription factor activity. Promotes growth of cardiomyocytes, but not cardiomyocyte proliferation. Promotes cardiac muscle hypertrophy. Plays a role in the regulation of the growth of actin filaments. Inhibits the activity of the F-actin-capping protein complex formed by the CAPZA1 and CAPZB heterodimer. In Bos taurus (Bovine), this protein is Myotrophin (MTPN).